We begin with the raw amino-acid sequence, 58 residues long: Large ribosomal subunit protein bL32 (58 aa).

It belongs to the bacterial ribosomal protein bL32 family.

The protein is Large ribosomal subunit protein bL32 of Sulfurihydrogenibium sp. (strain YO3AOP1).